The chain runs to 557 residues: Warthog protein 4 (557 aa).

The N-terminal stretch at 1-20 is a signal peptide; sequence MRFSLLALVLLSSSYKFTYG. The segment at 272–308 is disordered; sequence QETNPQPPPPPGQQGGFVQPQGFQPQGGFQPQGFQPQ. Low complexity predominate over residues 287 to 308; sequence GFVQPQGFQPQGGFQPQGFQPQ.

The protein belongs to the hedgehog family. In terms of processing, the C-terminal domain displays an autoproteolysis activity.

It is found in the secreted. The protein resides in the cell surface. The protein localises to the cell membrane. Its subcellular location is the extracellular space. In terms of biological role, intercellular signal essential for a variety of patterning events during development. The sequence is that of Warthog protein 4 (wrt-4) from Caenorhabditis elegans.